A 100-amino-acid polypeptide reads, in one-letter code: MNRLSASERQAALRELPGWLELEEREAIGRSYQFTDFSEAFGFMTRVALAAEKADHHPEWRNVYRTVDVVLTTHDAGGVTERDVKLAKAMDAIAERCGAR.

This sequence belongs to the pterin-4-alpha-carbinolamine dehydratase family.

It carries out the reaction (4aS,6R)-4a-hydroxy-L-erythro-5,6,7,8-tetrahydrobiopterin = (6R)-L-erythro-6,7-dihydrobiopterin + H2O. This is Putative pterin-4-alpha-carbinolamine dehydratase from Rhodopseudomonas palustris (strain TIE-1).